The chain runs to 133 residues: Transcription antitermination protein NusB (133 aa).

Belongs to the NusB family.

Functionally, involved in transcription antitermination. Required for transcription of ribosomal RNA (rRNA) genes. Binds specifically to the boxA antiterminator sequence of the ribosomal RNA (rrn) operons. The protein is Transcription antitermination protein NusB of Clostridium botulinum (strain Alaska E43 / Type E3).